A 351-amino-acid chain; its full sequence is Methylthioribose-1-phosphate isomerase (351 aa).

Residues 51–53, Arg-94, and Gln-199 contribute to the substrate site; that span reads RGA. Residue Asp-240 is the Proton donor of the active site. A substrate-binding site is contributed by 250-251; that stretch reads NK.

This sequence belongs to the EIF-2B alpha/beta/delta subunits family. MtnA subfamily. In terms of assembly, homodimer.

The catalysed reaction is 5-(methylsulfanyl)-alpha-D-ribose 1-phosphate = 5-(methylsulfanyl)-D-ribulose 1-phosphate. It participates in amino-acid biosynthesis; L-methionine biosynthesis via salvage pathway; L-methionine from S-methyl-5-thio-alpha-D-ribose 1-phosphate: step 1/6. Its function is as follows. Catalyzes the interconversion of methylthioribose-1-phosphate (MTR-1-P) into methylthioribulose-1-phosphate (MTRu-1-P). The protein is Methylthioribose-1-phosphate isomerase of Bacillus cereus (strain ZK / E33L).